Reading from the N-terminus, the 177-residue chain is uncharacterized protein (177 aa).

Positions 100–115 are enriched in low complexity; that stretch reads QVQPHQQTHQQSQQTH. Positions 100-135 are disordered; it reads QVQPHQQTHQQSQQTHNKTVANSGDPPPPPPSQPNK. Residues 141 to 158 form a helical membrane-spanning segment; it reads WIVGMVIGVVVLYLLYRY.

It localises to the membrane. This is an uncharacterized protein from Aedes vexans (Inland floodwater mosquito).